The sequence spans 243 residues: Chromosome partition protein MukE (243 aa).

The segment at 223–243 (LMENDTKSADEIDEEFDGEQE) is disordered. A compositionally biased stretch (acidic residues) spans 233–243 (EIDEEFDGEQE).

Belongs to the MukE family. In terms of assembly, interacts, and probably forms a ternary complex, with MukF and MukB. The complex formation is stimulated by calcium or magnesium.

It is found in the cytoplasm. The protein localises to the nucleoid. Involved in chromosome condensation, segregation and cell cycle progression. May participate in facilitating chromosome segregation by condensation DNA from both sides of a centrally located replisome during cell division. Probably acts via its interaction with MukB and MukF. The sequence is that of Chromosome partition protein MukE from Haemophilus influenzae (strain ATCC 51907 / DSM 11121 / KW20 / Rd).